The following is a 347-amino-acid chain: NADH-quinone oxidoreductase subunit H (347 aa).

9 helical membrane-spanning segments follow: residues 22-42, 59-79, 93-113, 124-144, 171-191, 198-218, 240-260, 285-305, and 321-341; these read GVVS…TAYL, PSLA…KLVF, FIIA…VIPI, IGGI…IIIA, MALS…IQIV, PIWL…SILA, VEYS…NMIL, IPGY…FLWI, and GLKV…AILV.

It belongs to the complex I subunit 1 family. As to quaternary structure, NDH-1 is composed of 14 different subunits. Subunits NuoA, H, J, K, L, M, N constitute the membrane sector of the complex.

Its subcellular location is the cell inner membrane. It catalyses the reaction a quinone + NADH + 5 H(+)(in) = a quinol + NAD(+) + 4 H(+)(out). NDH-1 shuttles electrons from NADH, via FMN and iron-sulfur (Fe-S) centers, to quinones in the respiratory chain. The immediate electron acceptor for the enzyme in this species is believed to be ubiquinone. Couples the redox reaction to proton translocation (for every two electrons transferred, four hydrogen ions are translocated across the cytoplasmic membrane), and thus conserves the redox energy in a proton gradient. This subunit may bind ubiquinone. In Orientia tsutsugamushi (strain Ikeda) (Rickettsia tsutsugamushi), this protein is NADH-quinone oxidoreductase subunit H.